The following is a 423-amino-acid chain: Histidine--tRNA ligase (423 aa).

Belongs to the class-II aminoacyl-tRNA synthetase family. Homodimer.

It localises to the cytoplasm. It catalyses the reaction tRNA(His) + L-histidine + ATP = L-histidyl-tRNA(His) + AMP + diphosphate + H(+). In Rhodococcus jostii (strain RHA1), this protein is Histidine--tRNA ligase.